Reading from the N-terminus, the 141-residue chain is Large ribosomal subunit protein uL11 (141 aa).

Belongs to the universal ribosomal protein uL11 family. In terms of assembly, part of the ribosomal stalk of the 50S ribosomal subunit. Interacts with L10 and the large rRNA to form the base of the stalk. L10 forms an elongated spine to which L12 dimers bind in a sequential fashion forming a multimeric L10(L12)X complex. Post-translationally, one or more lysine residues are methylated.

Forms part of the ribosomal stalk which helps the ribosome interact with GTP-bound translation factors. This is Large ribosomal subunit protein uL11 from Alkaliphilus oremlandii (strain OhILAs) (Clostridium oremlandii (strain OhILAs)).